We begin with the raw amino-acid sequence, 221 residues long: Dynein light chain Tctex-type 4 (221 aa).

2 disordered regions span residues 1-52 (MASR…SRRG) and 65-87 (NSLV…VPPL). Residues 10–21 (RQEEENAKDSGR) are compositionally biased toward basic and acidic residues. A Phosphoserine modification is found at Ser-66.

It belongs to the dynein light chain Tctex-type family. Interacts with ENG/endoglin, TGFBR2 and TGFBR3. Interacts with PPP1CC. In terms of tissue distribution, ubiquitously expressed. Expressed in testis (at protein level).

The protein localises to the cell projection. Its subcellular location is the cilium. It is found in the flagellum. It localises to the cytoplasmic vesicle. The protein resides in the secretory vesicle. The protein localises to the acrosome. Its subcellular location is the cytoplasm. It is found in the cytoskeleton. It localises to the cilium axoneme. The protein resides in the nucleus. The protein localises to the microtubule organizing center. The chain is Dynein light chain Tctex-type 4 from Homo sapiens (Human).